Reading from the N-terminus, the 154-residue chain is NADPH-dependent 7-cyano-7-deazaguanine reductase (154 aa).

Cys-52 (thioimide intermediate) is an active-site residue. Catalysis depends on Asp-59, which acts as the Proton donor. Residues 74–76 and 93–94 contribute to the substrate site; these read VES and HE.

The protein belongs to the GTP cyclohydrolase I family. QueF type 1 subfamily.

The protein resides in the cytoplasm. The enzyme catalyses 7-aminomethyl-7-carbaguanine + 2 NADP(+) = 7-cyano-7-deazaguanine + 2 NADPH + 3 H(+). The protein operates within tRNA modification; tRNA-queuosine biosynthesis. In terms of biological role, catalyzes the NADPH-dependent reduction of 7-cyano-7-deazaguanine (preQ0) to 7-aminomethyl-7-deazaguanine (preQ1). This chain is NADPH-dependent 7-cyano-7-deazaguanine reductase, found in Rhizobium rhizogenes (strain K84 / ATCC BAA-868) (Agrobacterium radiobacter).